The primary structure comprises 96 residues: UPF0235 protein YggU (96 aa).

This sequence belongs to the UPF0235 family.

The protein is UPF0235 protein YggU of Shigella flexneri.